The chain runs to 531 residues: Acetate CoA-transferase YdiF (531 aa).

Glu333 serves as the catalytic 5-glutamyl coenzyme A thioester intermediate.

It belongs to the 3-oxoacid CoA-transferase family. In terms of assembly, homotetramer; dimer of dimers.

It catalyses the reaction an acyl-CoA + acetate = a carboxylate + acetyl-CoA. CoA transferase having broad substrate specificity for short-chain acyl-CoA thioesters with the activity decreasing when the length of the carboxylic acid chain exceeds four carbons. Exhibits high activity with acetoacetyl-CoA, propionyl-CoA, crotonoyl-CoA or butyryl-CoA as donors, with acetate as an acceptor. When acetyl-CoA is used as the donor, propionate, acetoacetate, butyrate, isobutyrate, and 4-hydroxybutyrate can be utilized as acceptors but not isovalerate. May play a role in short-chain fatty acid metabolism in E.coli. The sequence is that of Acetate CoA-transferase YdiF from Escherichia coli O157:H7.